Reading from the N-terminus, the 93-residue chain is MDPRDVIIKPWITEQSTDQMEENKYTFVVAKDANKTQIKDAVQKLFGVKVKQVNTMNMKGKPKRLGIYQGKTPSWKKAIITLTDDSKAIDLFE.

It belongs to the universal ribosomal protein uL23 family. As to quaternary structure, part of the 50S ribosomal subunit. Contacts protein L29, and trigger factor when it is bound to the ribosome.

Its function is as follows. One of the early assembly proteins it binds 23S rRNA. One of the proteins that surrounds the polypeptide exit tunnel on the outside of the ribosome. Forms the main docking site for trigger factor binding to the ribosome. The polypeptide is Large ribosomal subunit protein uL23 (Natranaerobius thermophilus (strain ATCC BAA-1301 / DSM 18059 / JW/NM-WN-LF)).